The primary structure comprises 622 residues: Chaperone protein HtpG (622 aa).

The segment at 1-334 (MKGQETRGFQ…SNDLPLNVSR (334 aa)) is a; substrate-binding. The b stretch occupies residues 335-550 (EILQDSRITQ…ADEMSTQMAK (216 aa)). The tract at residues 551–622 (LFAAAGQQAP…IRRMNQLLTA (72 aa)) is c.

It belongs to the heat shock protein 90 family. As to quaternary structure, homodimer.

It is found in the cytoplasm. In terms of biological role, molecular chaperone. Has ATPase activity. In Yersinia pestis, this protein is Chaperone protein HtpG.